Consider the following 338-residue polypeptide: Probable family 20 transposase (338 aa).

The protein belongs to the transposase 20 family.

Its function is as follows. Required for the transposition of an insertion element. This chain is Probable family 20 transposase, found in Pseudomonas aeruginosa (strain ATCC 15692 / DSM 22644 / CIP 104116 / JCM 14847 / LMG 12228 / 1C / PRS 101 / PAO1).